The following is a 698-amino-acid chain: MVPGQAQPQSPEMLLLPLLLPVLGAGSLNKDPSYSLQVQRQVPVPEGLCVIVSCNLSYPRDGWDESTAAYGYWFKGRTSPKTGAPVATNNQSREVEMSTRDRFQLTGDPGKGSCSLVIRDAQREDEAWYFFRVERGSRVRHSFLSNAFFLKVTALTKKPDVYIPETLEPGQPVTVICVFNWAFKKCPAPSFSWTGAALSPRRTRPSTSHFSVLSFTPSPQDHDTDLTCHVDFSRKGVSAQRTVRLRVAYAPKDLIISISHDNTSALELQGNVIYLEVQKGQFLRLLCAADSQPPATLSWVLQDRVLSSSHPWGPRTLGLELRGVRAGDSGRYTCRAENRLGSQQQALDLSVQYPPENLRVMVSQANRTVLENLGNGTSLPVLEGQSLRLVCVTHSSPPARLSWTRWGQTVGPSQPSDPGVLELPPIQMEHEGEFTCHAQHPLGSQHVSLSLSVHYPPQLLGPSCSWEAEGLHCSCSSQASPAPSLRWWLGEELLEGNSSQGSFEVTPSSAGPWANSSLSLHGGLSSGLRLRCKAWNVHGAQSGSVFQLLPGKLEHGGGLGLGAALGAGVAALLAFCSCLVVFRVKICRKEARKRAAAEQDVPSTLGPISQGHQHECSAGSSQDHPPPGAATYTPGKGEEQELHYASLSFQGLRLWEPADQEAPSTTEYSEIKIHTGQPLRGPGFGLQLEREMSGMVPK.

The signal sequence occupies residues 1–27; the sequence is MVPGQAQPQSPEMLLLPLLLPVLGAGS. Over 28-561 the chain is Extracellular; sequence LNKDPSYSLQ…KLEHGGGLGL (534 aa). In terms of domain architecture, Ig-like V-type spans 31-134; sequence DPSYSLQVQR…DEAWYFFRVE (104 aa). 3 cysteine pairs are disulfide-bonded: cysteine 49–cysteine 186, cysteine 54–cysteine 114, and cysteine 177–cysteine 228. N-linked (GlcNAc...) asparagine glycosylation is found at asparagine 55 and asparagine 90. Arginine 132 is an N-acetylneuraminate binding site. Ig-like C2-type domains follow at residues 159–244, 251–350, and 355–452; these read PDVY…RTVR, PKDL…LDLS, and PENL…LSLS. The N-linked (GlcNAc...) asparagine glycan is linked to asparagine 262. A disulfide bridge connects residues cysteine 287 and cysteine 334. N-linked (GlcNAc...) asparagine glycans are attached at residues asparagine 366 and asparagine 375. Cysteines 391 and 436 form a disulfide. 2 N-linked (GlcNAc...) asparagine glycosylation sites follow: asparagine 497 and asparagine 515. A helical membrane pass occupies residues 562–584; it reads GAALGAGVAALLAFCSCLVVFRV. Residues 585–698 lie on the Cytoplasmic side of the membrane; the sequence is KICRKEARKR…EREMSGMVPK (114 aa). A disordered region spans residues 596–635; the sequence is AAEQDVPSTLGPISQGHQHECSAGSSQDHPPPGAATYTPG. Residues 642-647 carry the ITIM motif motif; that stretch reads LHYASL. Phosphotyrosine is present on tyrosine 668. Positions 675 to 698 are disordered; it reads TGQPLRGPGFGLQLEREMSGMVPK.

Belongs to the immunoglobulin superfamily. SIGLEC (sialic acid binding Ig-like lectin) family. In terms of assembly, interacts with PTPN6/SHP-1 and PTPN11/SHP-2 upon phosphorylation. Post-translationally, phosphorylated on tyrosine residues. Expressed by macrophages in various tissues including Kupffer cells. Also found in brain microglia.

It is found in the membrane. Putative adhesion molecule that mediates sialic-acid dependent binding to cells. Preferentially binds to alpha-2,8-linked sialic acid. The sialic acid recognition site may be masked by cis interactions with sialic acids on the same cell surface. In the immune response, may act as an inhibitory receptor upon ligand induced tyrosine phosphorylation by recruiting cytoplasmic phosphatase(s) via their SH2 domain(s) that block signal transduction through dephosphorylation of signaling molecules. This is Sialic acid-binding Ig-like lectin 11 (SIGLEC11) from Homo sapiens (Human).